Reading from the N-terminus, the 510-residue chain is Anaerobic nitric oxide reductase transcription regulator NorR (510 aa).

In terms of domain architecture, Sigma-54 factor interaction spans 188–417; it reads IIGNSQGMRT…LEHVIKRAAV (230 aa). ATP is bound by residues 216 to 223 and 279 to 288; these read GETGVGKE and ADGGTLFLDE. The H-T-H motif DNA-binding region spans 486-505; it reads WAATARQLELDSGNLHRLAK.

Its pathway is nitrogen metabolism; nitric oxide reduction. Functionally, required for the expression of anaerobic nitric oxide (NO) reductase, acts as a transcriptional activator for at least the norVW operon. Activation also requires sigma-54. This Vibrio vulnificus (strain CMCP6) protein is Anaerobic nitric oxide reductase transcription regulator NorR.